Reading from the N-terminus, the 1228-residue chain is Reverse gyrase (1228 aa).

The RG N-terminal-type zinc finger occupies 1–41 (MEVPLVAYLHSCPNCGGPITSDRLASGLPCRECLPDGAKAG). Zn(2+)-binding residues include C12, C15, C30, and C33. ATP-binding positions include Q88 and 105-112 (APTGSGKT). A Helicase ATP-binding domain is found at 92–255 (ARRFVRGKSF…NLTKQLRKAE (164 aa)). The short motif at 211 to 214 (DDVD) is the DEAD box element. The interval 631 to 1228 (DLMRTILMVV…RKEVLPHLAS (598 aa)) is topoisomerase I. In terms of domain architecture, Toprim spans 635-809 (TILMVVESPT…DIRRVEFHEV (175 aa)). 2 residues coordinate Mg(2+): E641 and D778. In terms of domain architecture, Topo IA-type catalytic spans 825–1223 (NFSLVKAQIV…LYDEFRKEVL (399 aa)). Y967 functions as the O-(5'-phospho-DNA)-tyrosine intermediate in the catalytic mechanism.

In the N-terminal section; belongs to the DEAD box helicase family. DDVD subfamily. It in the C-terminal section; belongs to the type IA topoisomerase family. In terms of assembly, monomer. Zn(2+) is required as a cofactor. It depends on Mg(2+) as a cofactor.

It is found in the cytoplasm. It carries out the reaction ATP + H2O = ADP + phosphate + H(+). Modifies the topological state of DNA by introducing positive supercoils in an ATP-dependent process, increasing the linking number in steps of +1. Binds to single-stranded DNA, transiently cleaves and then rejoins the ends, introducing a positive supercoil in the process. The scissile phosphodiester is attacked by the catalytic tyrosine of the enzyme, resulting in the formation of a DNA-(5'-phosphotyrosyl)-enzyme intermediate. Probably involved in rewinding DNA strands in regions of the chromosome that have opened up to allow replication, transcription, DNA repair and/or for DNA protection. The chain is Reverse gyrase from Pyrobaculum aerophilum (strain ATCC 51768 / DSM 7523 / JCM 9630 / CIP 104966 / NBRC 100827 / IM2).